A 372-amino-acid chain; its full sequence is Fatty acid 2-hydroxylase (372 aa).

Residues 8-86 enclose the Cytochrome b5 heme-binding domain; that stretch reads AASFTSAEVQ…LEQYYVGELR (79 aa). 2 residues coordinate heme: His-43 and His-69. A run of 2 helical transmembrane segments spans residues 168-188 and 213-233; these read VWYS…WSYY and SVFI…EYLI. Positions 219 to 361 constitute a Fatty acid hydroxylase domain; the sequence is FVLGMLIWTL…TKLWDYFFHT (143 aa). 5 residues coordinate Zn(2+): His-234, His-239, His-257, His-260, and His-261. 2 helical membrane-spanning segments follow: residues 268–288 and 290–310; these read SRLV…YVFL and LILP…GYVL. Zn(2+) contacts are provided by His-315, His-319, His-336, His-339, and His-340.

Belongs to the sterol desaturase family. SCS7 subfamily. Zn(2+) serves as cofactor. Detected in oligodendrocytes (at protein level). Detected in sciatic nerve.

Its subcellular location is the endoplasmic reticulum membrane. It is found in the microsome membrane. It catalyses the reaction a 1,2-saturated fatty acid + 2 Fe(II)-[cytochrome b5] + O2 + 2 H(+) = a (R)-2-hydroxy fatty acid + 2 Fe(III)-[cytochrome b5] + H2O. The catalysed reaction is hexadecanoate + 2 Fe(II)-[cytochrome b5] + O2 + 2 H(+) = (R)-2-hydroxyhexadecanoate + 2 Fe(III)-[cytochrome b5] + H2O. The enzyme catalyses octadecanoate + 2 Fe(II)-[cytochrome b5] + O2 + 2 H(+) = (R)-2-hydroxyoctadecanoate + 2 Fe(III)-[cytochrome b5] + H2O. It carries out the reaction docosanoate + 2 Fe(II)-[cytochrome b5] + O2 + 2 H(+) = 2-hydroxydocosanoate + 2 Fe(III)-[cytochrome b5] + H2O. It catalyses the reaction tetracosanoate + 2 Fe(II)-[cytochrome b5] + O2 + 2 H(+) = (R)-2-hydroxytetracosanoate + 2 Fe(III)-[cytochrome b5] + H2O. It functions in the pathway lipid metabolism; fatty acid metabolism. It participates in sphingolipid metabolism; galactosylceramide biosynthesis. Functionally, catalyzes the hydroxylation of free fatty acids at the C-2 position to produce 2-hydroxy fatty acids, which are building blocks of sphingolipids and glycosphingolipids common in neural tissue and epidermis. FA2H is stereospecific for the production of (R)-2-hydroxy fatty acids. Plays an essential role in the synthesis of galactosphingolipids of the myelin sheath. Responsible for the synthesis of sphingolipids and glycosphingolipids involved in the formation of epidermal lamellar bodies critical for skin permeability barrier. Participates in the synthesis of glycosphingolipids and a fraction of type II wax diesters in sebaceous gland, specifically regulating hair follicle homeostasis. Involved in the synthesis of sphingolipids of plasma membrane rafts, controlling lipid raft mobility and trafficking of raft-associated proteins. The polypeptide is Fatty acid 2-hydroxylase (Rattus norvegicus (Rat)).